The primary structure comprises 360 residues: Phospho-N-acetylmuramoyl-pentapeptide-transferase (360 aa).

The next 10 helical transmembrane spans lie at 25 to 45 (TGGA…WIID), 71 to 91 (TPTM…VLWA), 94 to 114 (LNPY…VGFY), 129 to 148 (SGRT…CYAL), 168 to 188 (TAIY…VGAG), 199 to 219 (GLAI…SYLA), 239 to 259 (LAVL…FNAP), 263 to 283 (IFMG…IAVA), 288 to 308 (FVLA…IVQV), and 337 to 357 (QIVI…LSTL).

This sequence belongs to the glycosyltransferase 4 family. MraY subfamily. The cofactor is Mg(2+).

The protein localises to the cell inner membrane. The enzyme catalyses UDP-N-acetyl-alpha-D-muramoyl-L-alanyl-gamma-D-glutamyl-meso-2,6-diaminopimeloyl-D-alanyl-D-alanine + di-trans,octa-cis-undecaprenyl phosphate = di-trans,octa-cis-undecaprenyl diphospho-N-acetyl-alpha-D-muramoyl-L-alanyl-D-glutamyl-meso-2,6-diaminopimeloyl-D-alanyl-D-alanine + UMP. It functions in the pathway cell wall biogenesis; peptidoglycan biosynthesis. Functionally, catalyzes the initial step of the lipid cycle reactions in the biosynthesis of the cell wall peptidoglycan: transfers peptidoglycan precursor phospho-MurNAc-pentapeptide from UDP-MurNAc-pentapeptide onto the lipid carrier undecaprenyl phosphate, yielding undecaprenyl-pyrophosphoryl-MurNAc-pentapeptide, known as lipid I. This Rhodopseudomonas palustris (strain BisA53) protein is Phospho-N-acetylmuramoyl-pentapeptide-transferase.